Reading from the N-terminus, the 813-residue chain is MRPRPEGALRAGAALSPVLLFLLLLPLLGHLWAASTPAPSSLSPGAQEDNQLGAGRVKRGWVWNQFFVVEEYTGTEPLYVGKIHSDSDEGDGTIKYTISGEGAGTIFLIDELTGDIHATERLDREQKTFYTLRAQARDRATNRLLEPESEFIIKVQDINDSEPRFLHGPYIGSVAELSPTGTSVMQVMASDADDPTYGSSARLVYSVLDGEHHFTVDPKTGVIRTAVPDLDRESQERYEVVIQATDMAGQLGGLSGSTTVTIVVTDVNDNPPRFPQKMYQFSIQESAPIGTAVGRVKAEDSDVGENTDMTYHLREESGSGGDAFKVTTDSDTQEAIIVVQKHLDFESQQVHTVVLEALNKFVDPRFADLGTFRDQAIVRVAVTDVDEPPEFRPPSGLLEVQEDAQVGSLVGVVTARDPDAANRPVRYAIDRDSDLEQIFDIDADTGAIVTGKGLDRETAGWHNITVLAMEADNHAQLSRASLRIRILDVNDNPPELATPYEAAVCEDAKPGQLIQTISVVDRDEPQGGHRFYFRLVPEAPSNPHFSLLDIEDNTAAVHTQHVGFNRQEQDVFLLPILVVDSGPPTLSSTGTLTIRICGCDSSGTIQSCNTTAFVMAASLSPGALIALLVCVLILVVLALLILTLRRHHKSHLSSDVDEDMRDNVIKYNDEGGGEQDTEAYDMSALRSLYDFGELKGGDPGGGAASPPQAASSSERHSLPRGPSSPEPDFSVFRDFISRKVALADADLSVPPYDAFQTYAFEGAGSPAASLSSLHSGSTGSEQDFAFLRAWGPRFRPLAALYAGHRGDDEAPAS.

A signal peptide spans 1-33 (MRPRPEGALRAGAALSPVLLFLLLLPLLGHLWA). Topologically, residues 34-621 (ASTPAPSSLS…AFVMAASLSP (588 aa)) are extracellular. Cadherin domains lie at 61-165 (WVWN…EPRF), 166-274 (LHGP…PPRF), 275-391 (PQKM…PPEF), 392-495 (RPPS…NPPE), and 496-613 (LATP…TTAF). N-linked (GlcNAc...) asparagine glycosylation is present at Asn159. Asn463 and Asn609 each carry an N-linked (GlcNAc...) asparagine glycan. The chain crosses the membrane as a helical span at residues 622–642 (GALIALLVCVLILVVLALLIL). Over 643-813 (TLRRHHKSHL…HRGDDEAPAS (171 aa)) the chain is Cytoplasmic. The disordered stretch occupies residues 696 to 726 (GGDPGGGAASPPQAASSSERHSLPRGPSSPE).

Predominantly expressed in brain. Abundant in olfactory bulb, cerebrum, and cerebellum, less in pons, medulla, and spinal cord. Low expression in heart. No expression in lung, liver, spleen, kidney, testis, stomach, intestine, colon, and placenta.

Its subcellular location is the cell membrane. Its function is as follows. Cadherins are calcium-dependent cell adhesion proteins. They preferentially interact with themselves in a homophilic manner in connecting cells; cadherins may thus contribute to the sorting of heterogeneous cell types. PB-cadherins may have a role in the morphological organization of pituitary gland and brain tissues. This Mus musculus (Mouse) protein is Cadherin-22 (Cdh22).